Here is a 427-residue protein sequence, read N- to C-terminus: Gamma-glutamyl phosphate reductase (427 aa).

This sequence belongs to the gamma-glutamyl phosphate reductase family.

It is found in the cytoplasm. It carries out the reaction L-glutamate 5-semialdehyde + phosphate + NADP(+) = L-glutamyl 5-phosphate + NADPH + H(+). Its pathway is amino-acid biosynthesis; L-proline biosynthesis; L-glutamate 5-semialdehyde from L-glutamate: step 2/2. In terms of biological role, catalyzes the NADPH-dependent reduction of L-glutamate 5-phosphate into L-glutamate 5-semialdehyde and phosphate. The product spontaneously undergoes cyclization to form 1-pyrroline-5-carboxylate. The protein is Gamma-glutamyl phosphate reductase of Brucella melitensis biotype 2 (strain ATCC 23457).